Reading from the N-terminus, the 284-residue chain is tRNA-cytidine(32) 2-sulfurtransferase (284 aa).

A PP-loop motif motif is present at residues 45 to 50; the sequence is SGGKDS. Positions 120, 123, and 211 each coordinate [4Fe-4S] cluster.

This sequence belongs to the TtcA family. Homodimer. It depends on Mg(2+) as a cofactor. The cofactor is [4Fe-4S] cluster.

Its subcellular location is the cytoplasm. It carries out the reaction cytidine(32) in tRNA + S-sulfanyl-L-cysteinyl-[cysteine desulfurase] + AH2 + ATP = 2-thiocytidine(32) in tRNA + L-cysteinyl-[cysteine desulfurase] + A + AMP + diphosphate + H(+). It functions in the pathway tRNA modification. Its function is as follows. Catalyzes the ATP-dependent 2-thiolation of cytidine in position 32 of tRNA, to form 2-thiocytidine (s(2)C32). The sulfur atoms are provided by the cysteine/cysteine desulfurase (IscS) system. In Alcanivorax borkumensis (strain ATCC 700651 / DSM 11573 / NCIMB 13689 / SK2), this protein is tRNA-cytidine(32) 2-sulfurtransferase.